A 482-amino-acid chain; its full sequence is Exodeoxyribonuclease 7 large subunit (482 aa).

The interval Thr457 to Phe482 is disordered.

Belongs to the XseA family. As to quaternary structure, heterooligomer composed of large and small subunits.

The protein resides in the cytoplasm. It carries out the reaction Exonucleolytic cleavage in either 5'- to 3'- or 3'- to 5'-direction to yield nucleoside 5'-phosphates.. Its function is as follows. Bidirectionally degrades single-stranded DNA into large acid-insoluble oligonucleotides, which are then degraded further into small acid-soluble oligonucleotides. This chain is Exodeoxyribonuclease 7 large subunit, found in Ruegeria pomeroyi (strain ATCC 700808 / DSM 15171 / DSS-3) (Silicibacter pomeroyi).